Here is a 918-residue protein sequence, read N- to C-terminus: Isoleucine--tRNA ligase (918 aa).

Positions 57–67 (PYANGHIHIGT) match the 'HIGH' region motif. Glutamate 552 is an L-isoleucyl-5'-AMP binding site. The short motif at 593-597 (KMSKS) is the 'KMSKS' region element. Position 596 (lysine 596) interacts with ATP. The Zn(2+) site is built by cysteine 886, cysteine 889, cysteine 906, and cysteine 909.

This sequence belongs to the class-I aminoacyl-tRNA synthetase family. IleS type 1 subfamily. In terms of assembly, monomer. It depends on Zn(2+) as a cofactor.

It localises to the cytoplasm. The enzyme catalyses tRNA(Ile) + L-isoleucine + ATP = L-isoleucyl-tRNA(Ile) + AMP + diphosphate. Functionally, catalyzes the attachment of isoleucine to tRNA(Ile). As IleRS can inadvertently accommodate and process structurally similar amino acids such as valine, to avoid such errors it has two additional distinct tRNA(Ile)-dependent editing activities. One activity is designated as 'pretransfer' editing and involves the hydrolysis of activated Val-AMP. The other activity is designated 'posttransfer' editing and involves deacylation of mischarged Val-tRNA(Ile). This is Isoleucine--tRNA ligase from Thermotoga neapolitana (strain ATCC 49049 / DSM 4359 / NBRC 107923 / NS-E).